The primary structure comprises 311 residues: MTELEDLPSVGEKTAQKLRDAGFADMMRLATATPKELSVKVEIGEGVAAKVIEAARKAEKIDFETAFEVMERREDVGRITTGSKGLDELIGGGIETQSITEVYGEFGSGKSQISHELSVTTQLPVEEGGLDGEVVFIDTENTFRPERIEQIAEGFGLNIEEVLKKIHVARAFNSSHQILMADKINELIQSGVNIKLIIIDSLMAHFRAEYVGRESLATRQQKLNQHLHTLQTIANTYNVAVLITNQVQSKPDSFFGTPTKAVGGHVLGHASTYRILLKKGLSGKRIARLVDSPHLPEGESVFKVTTEGLVD.

Position 104-111 (104-111 (GEFGSGKS)) interacts with ATP.

This sequence belongs to the eukaryotic RecA-like protein family.

Functionally, involved in DNA repair and in homologous recombination. Binds and assemble on single-stranded DNA to form a nucleoprotein filament. Hydrolyzes ATP in a ssDNA-dependent manner and promotes DNA strand exchange between homologous DNA molecules. The protein is DNA repair and recombination protein RadA of Methanosphaera stadtmanae (strain ATCC 43021 / DSM 3091 / JCM 11832 / MCB-3).